Consider the following 445-residue polypeptide: Phosphoglucosamine mutase (445 aa).

Ser-102 (phosphoserine intermediate) is an active-site residue. The Mg(2+) site is built by Ser-102, Asp-241, Asp-243, and Asp-245. Ser-102 carries the post-translational modification Phosphoserine.

It belongs to the phosphohexose mutase family. The cofactor is Mg(2+). Activated by phosphorylation.

The enzyme catalyses alpha-D-glucosamine 1-phosphate = D-glucosamine 6-phosphate. Functionally, catalyzes the conversion of glucosamine-6-phosphate to glucosamine-1-phosphate. The polypeptide is Phosphoglucosamine mutase (Shewanella pealeana (strain ATCC 700345 / ANG-SQ1)).